We begin with the raw amino-acid sequence, 573 residues long: Kinesin light chain 1 (573 aa).

Residues 27–156 adopt a coiled-coil conformation; that stretch reads KTKQVIQGLE…HLEFMNQLKK (130 aa). The span at 155–176 shows a compositional bias: basic and acidic residues; it reads KKYDDDISPSEDKDTDSTKEPL. Residues 155–203 form a disordered region; it reads KKYDDDISPSEDKDTDSTKEPLDDLFPNDEDDPGQGIQQQHSSAAAAAQ. S162 bears the Phosphoserine mark. Residues 188 to 203 show a composition bias toward low complexity; the sequence is GQGIQQQHSSAAAAAQ. TPR repeat units lie at residues 213–246, 255–288, 297–330, 339–372, and 381–414; these read LRTL…LEKT, ATML…REKT, AATL…REKV, AKQL…YQTK, and AKTK…AHER. At Y449 the chain carries Phosphotyrosine. S460 is subject to Phosphoserine. Residues 464-497 form a TPR 6 repeat; the sequence is TTTLKNLGALYRRQGKFEAAETLEEAAMRSRKQG. 2 positions are modified to phosphoserine; by AMPK: S521 and S524. E547 carries the post-translational modification Phosphoserine. A disordered region spans residues 553–573; it reads SGRASFCGKRQQQQWPGRRHR.

Belongs to the kinesin light chain family. As to quaternary structure, oligomeric complex composed of two heavy chains and two light chains. Interacts with SPAG9. Interacts with ATCAY; may link mitochondria to KLC1 and regulate mitochondria localization into neuron projections. Interacts (via TPR repeats) with TOR1A; the interaction associates TOR1A with the kinesin oligomeric complex. Interacts with BORCS5. Interacts with MAPK8IP3/JIP3 and NTRK2/TRKB; interaction with NTRK2/TRKB is mediated by MAPK8IP3/JIP3. Interacts with CLSTN1; phosphorylation at Ser-460 inhibits interaction with CLSTN1. (Microbial infection) Interacts with adenovirus hexon-interlacing protein; this interaction leads to capsid disruption at the nuclear pore complex during virus entry into host cell. Post-translationally, phosphorylation at Ser-460 by ERK inhibits interaction with CLSTN1 and localization to cytoplasmic vesicles. As to expression, found in a variety of tissues. Mostly abundant in brain and spine.

The protein localises to the cell projection. The protein resides in the growth cone. It is found in the cytoplasmic vesicle. It localises to the cytoplasm. Its subcellular location is the cytoskeleton. Its function is as follows. Kinesin is a microtubule-associated force-producing protein that may play a role in organelle transport. The light chain may function in coupling of cargo to the heavy chain or in the modulation of its ATPase activity. The sequence is that of Kinesin light chain 1 (KLC1) from Homo sapiens (Human).